The chain runs to 159 residues: Transcriptional repressor NrdR (159 aa).

Residues Cys-3–Cys-34 fold into a zinc finger. Positions Pro-49–Glu-139 constitute an ATP-cone domain.

This sequence belongs to the NrdR family. Zn(2+) is required as a cofactor.

In terms of biological role, negatively regulates transcription of bacterial ribonucleotide reductase nrd genes and operons by binding to NrdR-boxes. The sequence is that of Transcriptional repressor NrdR from Burkholderia thailandensis (strain ATCC 700388 / DSM 13276 / CCUG 48851 / CIP 106301 / E264).